An 89-amino-acid polypeptide reads, in one-letter code: Defensin-like protein 108 (89 aa).

A signal peptide spans Met-1 to Cys-20. Cystine bridges form between Cys-39-Cys-81, Cys-49-Cys-71, Cys-57-Cys-79, and Cys-61-Cys-80.

This sequence belongs to the DEFL family.

It localises to the secreted. The polypeptide is Defensin-like protein 108 (LCR51) (Arabidopsis thaliana (Mouse-ear cress)).